We begin with the raw amino-acid sequence, 269 residues long: Bidirectional sugar transporter SWEET1a (269 aa).

The Extracellular portion of the chain corresponds to 1 to 6 (MEHIAR). The helical transmembrane segment at 7-27 (FFFGVSGNVIALFLFLSPVVT) threads the bilayer. Residues 8-96 (FFGVSGNVIA…IFLIFAVDRR (89 aa)) form the MtN3/slv 1 domain. Residues 28 to 42 (FWRIIRKRSTEDFSG) are Cytoplasmic-facing. Residues 43–63 (VPYNMTLLNCLLSAWYGLPFV) traverse the membrane as a helical segment. Residues 64-72 (SPNNILVST) lie on the Extracellular side of the membrane. Residues 73–93 (INGTGSVIEAIYVVIFLIFAV) form a helical membrane-spanning segment. Residues 94–100 (DRRARLR) lie on the Cytoplasmic side of the membrane. The chain crosses the membrane as a helical span at residues 101–121 (MLGLLSIVVSIFATVVLVSLL). Over 122–129 (ALHGNARK) the chain is Extracellular. The chain crosses the membrane as a helical span at residues 130–150 (VFCGLAATIFSICMYASPLSI). Residues 132–215 (CGLAATIFSI…ILYFIYRKNK (84 aa)) form the MtN3/slv 2 domain. At 151–164 (MRLVIKTKSVEYMP) the chain is on the cytoplasmic side. Residues 165–185 (FLLSLAVFLCGTSWFIYGLLG) traverse the membrane as a helical segment. Topologically, residues 186–189 (RDPF) are extracellular. The helical transmembrane segment at 190-210 (IIIPNGCGSFLGLVQLILYFI) threads the bilayer. The Cytoplasmic portion of the chain corresponds to 211-269 (YRKNKGPAVPAGKGEAAAAADVEDAKKVAAAVEMADATTTNKAAADTVVGDGKVVASQV).

The protein belongs to the SWEET sugar transporter family. Forms homooligomers and/or heterooligomers.

Its subcellular location is the cell membrane. Mediates both low-affinity uptake and efflux of sugar across the plasma membrane. The sequence is that of Bidirectional sugar transporter SWEET1a from Sorghum bicolor (Sorghum).